Reading from the N-terminus, the 196-residue chain is dTTP/UTP pyrophosphatase (196 aa).

The Proton acceptor role is filled by Asp77.

Belongs to the Maf family. YhdE subfamily. The cofactor is a divalent metal cation.

It localises to the cytoplasm. It catalyses the reaction dTTP + H2O = dTMP + diphosphate + H(+). The catalysed reaction is UTP + H2O = UMP + diphosphate + H(+). Functionally, nucleoside triphosphate pyrophosphatase that hydrolyzes dTTP and UTP. May have a dual role in cell division arrest and in preventing the incorporation of modified nucleotides into cellular nucleic acids. The polypeptide is dTTP/UTP pyrophosphatase (Christiangramia forsetii (strain DSM 17595 / CGMCC 1.15422 / KT0803) (Gramella forsetii)).